A 427-amino-acid polypeptide reads, in one-letter code: MESLTLQPIARVDGAINLPGSKSVSNRALLLAALACGKTVLTNLLDSDDVRHMLNALSALGINYTLSADRTRCDITGNGGALRAPGALELFLGNAGTAMRPLAAALCLGQNEIVLTGEPRMKERPIGHLVDSLRQGGANIDYLEQENYPPLRLRGGFTGGEIEVDGSVSSQFLTALLMTAPLAPEDTTIRVKGELVSKPYIDITLNLMKTFGVEIANHHYQQFVVKGGQQYHSPGRYLVEGDASSASYFLAAGAIKGGTVKVTGIGRKSMQGDIRFADVLEKMGATITWGDDFIACTRGELHAIDMDMNHIPDAAMTIATTALFAKGTTTLRNIYNWRVKETDRLFAMATELRKVGAEVEEGHDYIRITPPAKLHHADIGTYNDHRMAMCFSLVALSDTPVTILDPKCTAKTFPDYFEQLARMSTPA.

3-phosphoshikimate contacts are provided by K22, S23, and R27. K22 is a binding site for phosphoenolpyruvate. Phosphoenolpyruvate contacts are provided by G96 and R124. The 3-phosphoshikimate site is built by S169, S170, Q171, S197, D313, N336, and K340. Q171 serves as a coordination point for phosphoenolpyruvate. The active-site Proton acceptor is D313. 3 residues coordinate phosphoenolpyruvate: R344, R386, and K411.

Belongs to the EPSP synthase family. In terms of assembly, monomer.

It is found in the cytoplasm. It carries out the reaction 3-phosphoshikimate + phosphoenolpyruvate = 5-O-(1-carboxyvinyl)-3-phosphoshikimate + phosphate. Its pathway is metabolic intermediate biosynthesis; chorismate biosynthesis; chorismate from D-erythrose 4-phosphate and phosphoenolpyruvate: step 6/7. Functionally, catalyzes the transfer of the enolpyruvyl moiety of phosphoenolpyruvate (PEP) to the 5-hydroxyl of shikimate-3-phosphate (S3P) to produce enolpyruvyl shikimate-3-phosphate and inorganic phosphate. The sequence is that of 3-phosphoshikimate 1-carboxyvinyltransferase from Salmonella schwarzengrund (strain CVM19633).